The sequence spans 478 residues: 7-dehydrocholesterol reductase (478 aa).

Residues Met-1–Glu-28 are disordered. Helical transmembrane passes span Leu-43 to Ala-63, Trp-97 to Val-117, Trp-180 to Ile-200, Val-269 to Trp-289, Leu-309 to Val-329, and Ile-333 to Ile-353. NADP(+) is bound by residues Lys-361, Arg-365, Met-398, Trp-403, and Asn-410 to Tyr-411. Residues Ala-424–Val-444 traverse the membrane as a helical segment. Residues Asp-450, Cys-454–Tyr-458, and Tyr-465 each bind NADP(+).

Belongs to the ERG4/ERG24 family.

Its subcellular location is the endoplasmic reticulum membrane. It catalyses the reaction cholesterol + NADP(+) = 7-dehydrocholesterol + NADPH + H(+). The enzyme catalyses 7-dehydrodesmosterol + NADPH + H(+) = desmosterol + NADP(+). Its pathway is steroid biosynthesis; cholesterol biosynthesis. In terms of biological role, catalyzes the last step of the cholesterol synthesis pathway, which transforms cholesta-5,7-dien-3beta-ol (7-dehydrocholesterol,7-DHC) into cholesterol by reducing the C7-C8 double bond of its sterol core. Can also metabolize cholesta-5,7,24-trien-3beta-ol (7-dehydrodemosterol, 7-DHD) to desmosterol, which is then metabolized by the Delta(24)-sterol reductase (DHCR24) to cholesterol. Modulates ferroptosis (a form of regulated cell death driven by iron-dependent lipid peroxidation) through the metabolic breakdown of the anti-ferroptotic metabolites 7-DHC and 7-DHD which, when accumulated, divert the propagation of peroxyl radical-mediated damage from phospholipid components to its sterol core, protecting plasma and mitochondrial membranes from phospholipid autoxidation. This Danio rerio (Zebrafish) protein is 7-dehydrocholesterol reductase (dhcr7).